A 314-amino-acid polypeptide reads, in one-letter code: Probable cell division protein WhiA (314 aa).

The H-T-H motif DNA-binding region spans 275-309 (SLKELGELVTSGAISKSGVNHRLKKIDEFAEKIKR).

It belongs to the WhiA family.

Involved in cell division and chromosome segregation. The polypeptide is Probable cell division protein WhiA (Oceanobacillus iheyensis (strain DSM 14371 / CIP 107618 / JCM 11309 / KCTC 3954 / HTE831)).